Consider the following 424-residue polypeptide: Probable ribonuclease FAU-1 (424 aa).

Belongs to the FAU-1 family.

Probable RNase involved in rRNA stability through maturation and/or degradation of precursor rRNAs. Binds to RNA in loop regions with AU-rich sequences. This chain is Probable ribonuclease FAU-1, found in Saccharolobus solfataricus (strain ATCC 35092 / DSM 1617 / JCM 11322 / P2) (Sulfolobus solfataricus).